Reading from the N-terminus, the 253-residue chain is PVAGEENQYIAYVAYPLDLFEEGSVTNMFTSIVGNVFGFKALRALRLEDLRIPTAYVKTFQGPPHGIQVERDKLNKYGRPLLGCTIKPKLGLSAKNYGRAVYECLRGGLDFTKDDENVNSQPFMRWRDRFLFCAEALYKAQAETGEIKGHYLNATAGTCEEMMKRAIFARELGVPIVMHDYLTGGFTANTSLAHYCRDNGLLLHIHRAMHAVIDRQKNHGIHFRVLAKALRMSGGDHIHSGTVVGKLEGERDI.

2 residues coordinate substrate: Asn-35 and Thr-85. Lys-87 acts as the Proton acceptor in catalysis. Residue Lys-89 coordinates substrate. Positions 113, 115, and 116 each coordinate Mg(2+). Lys-113 carries the N6-carboxylysine modification. His-206 functions as the Proton acceptor in the catalytic mechanism. The substrate site is built by Arg-207 and His-239.

This sequence belongs to the RuBisCO large chain family. Type I subfamily. In terms of assembly, heterohexadecamer of 8 large chains and 8 small chains; disulfide-linked. The disulfide link is formed within the large subunit homodimers. It depends on Mg(2+) as a cofactor. Post-translationally, the disulfide bond which can form in the large chain dimeric partners within the hexadecamer appears to be associated with oxidative stress and protein turnover.

The protein localises to the plastid. The protein resides in the chloroplast. It carries out the reaction 2 (2R)-3-phosphoglycerate + 2 H(+) = D-ribulose 1,5-bisphosphate + CO2 + H2O. The catalysed reaction is D-ribulose 1,5-bisphosphate + O2 = 2-phosphoglycolate + (2R)-3-phosphoglycerate + 2 H(+). Functionally, ruBisCO catalyzes two reactions: the carboxylation of D-ribulose 1,5-bisphosphate, the primary event in carbon dioxide fixation, as well as the oxidative fragmentation of the pentose substrate in the photorespiration process. Both reactions occur simultaneously and in competition at the same active site. This Magnolia latahensis (Apocynophyllum latahense) protein is Ribulose bisphosphate carboxylase large chain (rbcL).